A 138-amino-acid chain; its full sequence is Ribonuclease VapC21 (138 aa).

The 123-residue stretch at 6 to 128 folds into the PINc domain; the sequence is LLDKSAAYRA…ERIAAITRQP (123 aa). Mg(2+)-binding residues include Asp8 and Asp97.

It belongs to the PINc/VapC protein family. Requires Mg(2+) as cofactor.

In terms of biological role, toxic component of a type II toxin-antitoxin (TA) system. An RNase. Its toxic effect is neutralized by coexpression with cognate antitoxin VapB21. This chain is Ribonuclease VapC21, found in Mycobacterium tuberculosis (strain CDC 1551 / Oshkosh).